We begin with the raw amino-acid sequence, 198 residues long: Peptidyl-tRNA hydrolase (198 aa).

A tRNA-binding site is contributed by tyrosine 15. Catalysis depends on histidine 20, which acts as the Proton acceptor. The tRNA site is built by phenylalanine 65, asparagine 67, and asparagine 113.

The protein belongs to the PTH family. In terms of assembly, monomer.

The protein localises to the cytoplasm. The catalysed reaction is an N-acyl-L-alpha-aminoacyl-tRNA + H2O = an N-acyl-L-amino acid + a tRNA + H(+). Hydrolyzes ribosome-free peptidyl-tRNAs (with 1 or more amino acids incorporated), which drop off the ribosome during protein synthesis, or as a result of ribosome stalling. Its function is as follows. Catalyzes the release of premature peptidyl moieties from peptidyl-tRNA molecules trapped in stalled 50S ribosomal subunits, and thus maintains levels of free tRNAs and 50S ribosomes. This is Peptidyl-tRNA hydrolase from Ehrlichia chaffeensis (strain ATCC CRL-10679 / Arkansas).